Here is a 267-residue protein sequence, read N- to C-terminus: tRNA pseudouridine synthase A (267 aa).

Asp53 functions as the Nucleophile in the catalytic mechanism. Tyr114 serves as a coordination point for substrate.

It belongs to the tRNA pseudouridine synthase TruA family. Homodimer.

It catalyses the reaction uridine(38/39/40) in tRNA = pseudouridine(38/39/40) in tRNA. Formation of pseudouridine at positions 38, 39 and 40 in the anticodon stem and loop of transfer RNAs. This chain is tRNA pseudouridine synthase A, found in Chlamydia trachomatis serovar A (strain ATCC VR-571B / DSM 19440 / HAR-13).